We begin with the raw amino-acid sequence, 78 residues long: Conotoxin Cl11.1 (78 aa).

An N-terminal signal peptide occupies residues 1–19 (MKLALTFLLILMILPLTTG). Positions 20–33 (GKKSDNQALKRLGA) are excised as a propeptide. 4 disulfides stabilise this stretch: cysteine 47-cysteine 61, cysteine 54-cysteine 66, cysteine 60-cysteine 70, and cysteine 65-cysteine 77.

It belongs to the conotoxin I1 superfamily. Expressed by the venom duct.

The protein localises to the secreted. The protein is Conotoxin Cl11.1 of Californiconus californicus (California cone).